A 769-amino-acid polypeptide reads, in one-letter code: CO(2)-response secreted protease (769 aa).

The signal sequence occupies residues 1–27 (MKGITFFTPFLSFLYLLCILFMTETEA). The Inhibitor I9 domain maps to 35–108 (VYIVYMGSAS…VFPDPHFQLH (74 aa)). The Peptidase S8 domain maps to 112-613 (SWDFLKYQTS…AGELSSTASM (502 aa)). Residues aspartate 145 and histidine 210 each act as charge relay system in the active site. The PA domain occupies 381-465 (ADASEGSARA…SKEAAEIFSY (85 aa)). The active-site Charge relay system is the serine 546.

It belongs to the peptidase S8 family. As to expression, expressed in roots, guard cells and meristemoid and pavement cells.

It localises to the secreted. Its subcellular location is the cell wall. The catalysed reaction is Release of an N-terminal tripeptide from a polypeptide.. In terms of biological role, mediates CO(2)-controlled stomatal development by cleaving peptide EPF2 (AC Q8LC53). Not active on peptides EPF1 (AC Q8S8I4) or stomagen (AC Q9SV72). The sequence is that of CO(2)-response secreted protease from Arabidopsis thaliana (Mouse-ear cress).